We begin with the raw amino-acid sequence, 361 residues long: Holliday junction branch migration complex subunit RuvB (361 aa).

Composition is skewed to polar residues over residues 1–15 and 28–40; these read MAIK…SPNV and ERST…QQEA. Residues 1–41 form a disordered region; the sequence is MAIKRSGNNNLSPNVKSDLLSPEVIPQERSTSPELEQQEAS. A large ATPase domain (RuvB-L) region spans residues 13-203; that stretch reads PNVKSDLLSP…FGLIQRLRFY (191 aa). Residues leucine 42, arginine 43, glycine 84, lysine 87, threonine 88, threonine 89, 150 to 152, arginine 193, tyrosine 203, and arginine 240 each bind ATP; that span reads EDF. Residue threonine 88 coordinates Mg(2+). The tract at residues 204–274 is small ATPAse domain (RuvB-S); sequence EVDELQQIIL…LASEALDLYQ (71 aa). A head domain (RuvB-H) region spans residues 277–361; the sequence is KRGLDWTDRL…PTPLLPWKES (85 aa). DNA is bound by residues arginine 332 and arginine 337.

The protein belongs to the RuvB family. Homohexamer. Forms an RuvA(8)-RuvB(12)-Holliday junction (HJ) complex. HJ DNA is sandwiched between 2 RuvA tetramers; dsDNA enters through RuvA and exits via RuvB. An RuvB hexamer assembles on each DNA strand where it exits the tetramer. Each RuvB hexamer is contacted by two RuvA subunits (via domain III) on 2 adjacent RuvB subunits; this complex drives branch migration. In the full resolvosome a probable DNA-RuvA(4)-RuvB(12)-RuvC(2) complex forms which resolves the HJ.

It is found in the cytoplasm. It catalyses the reaction ATP + H2O = ADP + phosphate + H(+). Its function is as follows. The RuvA-RuvB-RuvC complex processes Holliday junction (HJ) DNA during genetic recombination and DNA repair, while the RuvA-RuvB complex plays an important role in the rescue of blocked DNA replication forks via replication fork reversal (RFR). RuvA specifically binds to HJ cruciform DNA, conferring on it an open structure. The RuvB hexamer acts as an ATP-dependent pump, pulling dsDNA into and through the RuvAB complex. RuvB forms 2 homohexamers on either side of HJ DNA bound by 1 or 2 RuvA tetramers; 4 subunits per hexamer contact DNA at a time. Coordinated motions by a converter formed by DNA-disengaged RuvB subunits stimulates ATP hydrolysis and nucleotide exchange. Immobilization of the converter enables RuvB to convert the ATP-contained energy into a lever motion, pulling 2 nucleotides of DNA out of the RuvA tetramer per ATP hydrolyzed, thus driving DNA branch migration. The RuvB motors rotate together with the DNA substrate, which together with the progressing nucleotide cycle form the mechanistic basis for DNA recombination by continuous HJ branch migration. Branch migration allows RuvC to scan DNA until it finds its consensus sequence, where it cleaves and resolves cruciform DNA. Participates in UV-tolerance of Synechocystis PCC 6803. This chain is Holliday junction branch migration complex subunit RuvB, found in Synechocystis sp. (strain ATCC 27184 / PCC 6803 / Kazusa).